Consider the following 78-residue polypeptide: Esculentin-2Vb (78 aa).

Residues 1–22 (MFTMKKSLLLLFFLGTISLSLC) form the signal peptide. Residues 23 to 39 (EEERGADEEEGDGEKLM) constitute a propeptide that is removed on maturation. Cysteines 72 and 78 form a disulfide.

As to expression, expressed by the skin glands.

It is found in the secreted. Functionally, antimicrobial peptide. This is Esculentin-2Vb from Odorrana versabilis (Chinese bamboo leaf odorous frog).